The sequence spans 213 residues: Putative thymidylate kinase 251L (213 aa).

21–28 is a binding site for ATP; sequence GCDKTGKS.

Belongs to the thymidylate kinase family.

The enzyme catalyses dTMP + ATP = dTDP + ADP. It functions in the pathway pyrimidine metabolism; dTTP biosynthesis. Catalyzes the conversion of dTMP to dTDP. The sequence is that of Putative thymidylate kinase 251L from Acheta domesticus (House cricket).